Reading from the N-terminus, the 49-residue chain is Protein YdfW (49 aa).

The disordered stretch occupies residues 16–49; sequence PKADHPWLTRRTQSHQQVKPPKLPKKKPDPDKKD.

Its function is as follows. May be involved in H(2) production during fermentative growth. This Escherichia coli (strain K12) protein is Protein YdfW (ydfW).